The primary structure comprises 106 residues: Small ribosomal subunit protein uS10 (106 aa).

This sequence belongs to the universal ribosomal protein uS10 family. In terms of assembly, part of the 30S ribosomal subunit.

Involved in the binding of tRNA to the ribosomes. This Pyrobaculum arsenaticum (strain DSM 13514 / JCM 11321 / PZ6) protein is Small ribosomal subunit protein uS10.